We begin with the raw amino-acid sequence, 147 residues long: D-aminoacyl-tRNA deacylase (147 aa).

The short motif at 137-138 (GP) is the Gly-cisPro motif, important for rejection of L-amino acids element.

The protein belongs to the DTD family. As to quaternary structure, homodimer.

The protein localises to the cytoplasm. It carries out the reaction glycyl-tRNA(Ala) + H2O = tRNA(Ala) + glycine + H(+). The enzyme catalyses a D-aminoacyl-tRNA + H2O = a tRNA + a D-alpha-amino acid + H(+). An aminoacyl-tRNA editing enzyme that deacylates mischarged D-aminoacyl-tRNAs. Also deacylates mischarged glycyl-tRNA(Ala), protecting cells against glycine mischarging by AlaRS. Acts via tRNA-based rather than protein-based catalysis; rejects L-amino acids rather than detecting D-amino acids in the active site. By recycling D-aminoacyl-tRNA to D-amino acids and free tRNA molecules, this enzyme counteracts the toxicity associated with the formation of D-aminoacyl-tRNA entities in vivo and helps enforce protein L-homochirality. Upon expression in B.subtilis strain 168 confers resistance to D-Tyr and D-Asp, suggesting it acts on both of these amino acids. In Bacillus amyloliquefaciens (Bacillus velezensis), this protein is D-aminoacyl-tRNA deacylase.